The primary structure comprises 224 residues: Claudin-19 (224 aa).

Residues 1–7 are Cytoplasmic-facing; sequence MANSGLQ. A helical transmembrane segment spans residues 8–28; the sequence is LLGYFLALGGWVGIIASTALP. Over 29 to 81 the chain is Extracellular; that stretch reads QWKQSSYAGDAIITAVGLYEGLWMSCASQSTGQVQCKLYDSLLALDGHIQSAR. Residues cysteine 54 and cysteine 64 are joined by a disulfide bond. The helical transmembrane segment at 82-102 threads the bilayer; it reads ALMVVAVLLGFVAMVLSVVGM. Topologically, residues 103-117 are cytoplasmic; the sequence is KCTRVGDSNPTAKGR. Residues 118 to 138 traverse the membrane as a helical segment; that stretch reads VAISGGALFLLAGLCTLTAVS. Topologically, residues 139–160 are extracellular; that stretch reads WYATLVTQEFFNPSTPVNARYE. The helical transmembrane segment at 161 to 181 threads the bilayer; sequence FGPALFVGWASAGLAILGGSF. Over 182-224 the chain is Cytoplasmic; it reads LCCTCPEPERANSIPQPYRSGPSTAAREPVVKLSTSVKGPLGV.

This sequence belongs to the claudin family. In terms of assembly, can form homo- and heteropolymeric tight junction strands. Interacts with other claudins including CLDN3, CLDN10, CLDN16 and CLDN18 with highest affinity for CLDN16. Interacts (via PDZ-binding motif TRV) with TJP1 (via PDZ domain).

It is found in the cell junction. It localises to the tight junction. The protein resides in the cell membrane. It carries out the reaction Mg(2+)(in) = Mg(2+)(out). The enzyme catalyses Ca(2+)(in) = Ca(2+)(out). The catalysed reaction is Na(+)(in) = Na(+)(out). It catalyses the reaction K(+)(in) = K(+)(out). It carries out the reaction Rb(+)(in) = Rb(+)(out). The enzyme catalyses Cs(+)(in) = Cs(+)(out). The catalysed reaction is Li(+)(in) = Li(+)(out). Functionally, forms paracellular channels: coassembles with CLDN16 into tight junction strands with cation-selective channels through the strands, conveying epithelial permeability in a process known as paracellular tight junction permeability. Involved in the maintenance of ion gradients along the nephron. In the thick ascending limb (TAL) of Henle's loop, facilitates sodium paracellular permeability from the interstitial compartment to the lumen, contributing to the lumen-positive transepithelial potential that drives paracellular magnesium and calcium reabsorption. Forms paracellular barriers on its own. In the peripheral nervous system, represents a major constituent of the tight junctions in Schwann cells and contributes to electrical sealing. During retinal neurogenesis, may regulate the barrier properties of tight junctions in retinal pigment epithelium, required for proper retinal tissue differentiation and vision. This Rattus norvegicus (Rat) protein is Claudin-19.